The sequence spans 743 residues: Keratin, type I cytoskeletal 9 (743 aa).

Low complexity predominate over residues 1-16 (MSCRQSSSSFWSSSSS). The disordered stretch occupies residues 1–46 (MSCRQSSSSFWSSSSSCGGGGGRGGSGGSMRSSFSRSSRAGGGGGG). The tract at residues 1–130 (MSCRQSSSSF…GGEGGILNTN (130 aa)) is head. Ser14 and Ser16 each carry phosphoserine. Residues 17 to 28 (CGGGGGRGGSGG) show a composition bias toward gly residues. Residues 29–39 (SMRSSFSRSSR) are compositionally biased toward low complexity. A phosphoserine mark is found at Ser55 and Ser155. The coil 1A stretch occupies residues 131–166 (EKIVMQNLNSRLASYMEKVLELEESNTAMEKQIQDW). An IF rod domain is found at 131-443 (EKIVMQNLNS…ELLEGGQQDF (313 aa)). The linker 1 stretch occupies residues 167–185 (YSKRGPKVFQKDNTHYYDT). The segment at 186–277 (IEDLKDRIVD…KNHKEEMSQL (92 aa)) is coil 1B. The segment at 278–300 (TGQNDGDVNVEINVAPSTDLTRV) is linker 12. The segment at 301–439 (LNDMREEYEQ…ETYRELLEGG (139 aa)) is coil 2. Disordered regions lie at residues 440–468 (QQDFESSGAGQIGFGSGKGRQRGSGGSYG) and 501–743 (GGSG…KMRY). A tail region spans residues 440–709 (QQDFESSGAG…GGGSGSGGGS (270 aa)). Composition is skewed to gly residues over residues 449–468 (GQIGFGSGKGRQRGSGGSYG) and 501–717 (GGSG…GGGN).

This sequence belongs to the intermediate filament family. In terms of assembly, heterotetramer of two type I and two type II keratins. In terms of tissue distribution, expressed in footpad epidermis and testis (at protein level).

Its function is as follows. May serve an important special function either in the mature palmar and plantar skin tissue or in the morphogenetic program of the formation of these tissues. Plays a role in keratin filament assembly. Plays an essential role in the correct development of sperm. The polypeptide is Keratin, type I cytoskeletal 9 (Mus musculus (Mouse)).